Here is a 453-residue protein sequence, read N- to C-terminus: UDP-glycosyltransferase 79B6 (453 aa).

Residues S266, V325–Q327, H342–E350, and L364–Q367 each bind UDP-alpha-D-glucose.

The protein belongs to the UDP-glycosyltransferase family.

This chain is UDP-glycosyltransferase 79B6 (UGT79B6), found in Arabidopsis thaliana (Mouse-ear cress).